Here is an 89-residue protein sequence, read N- to C-terminus: UPF0145 protein MJ1170 (89 aa).

Belongs to the UPF0145 family. Highly divergent.

This chain is UPF0145 protein MJ1170, found in Methanocaldococcus jannaschii (strain ATCC 43067 / DSM 2661 / JAL-1 / JCM 10045 / NBRC 100440) (Methanococcus jannaschii).